We begin with the raw amino-acid sequence, 457 residues long: Argininosuccinate lyase (457 aa).

This sequence belongs to the lyase 1 family. Argininosuccinate lyase subfamily.

It is found in the cytoplasm. The enzyme catalyses 2-(N(omega)-L-arginino)succinate = fumarate + L-arginine. It functions in the pathway amino-acid biosynthesis; L-arginine biosynthesis; L-arginine from L-ornithine and carbamoyl phosphate: step 3/3. The protein is Argininosuccinate lyase of Psychrobacter arcticus (strain DSM 17307 / VKM B-2377 / 273-4).